We begin with the raw amino-acid sequence, 997 residues long: Translation initiation factor IF-2 (997 aa).

The segment at 36 to 415 is disordered; it reads SMAGSLTTEE…ATQPLKAAKR (380 aa). Basic and acidic residues-rich tracts occupy residues 45 to 65 and 94 to 107; these read EAAR…ERSG and AREE…EKPA. A compositionally biased stretch (low complexity) spans 108-126; the sequence is AVEAPAQAEPVAEAPAASP. Residues 127–147 are compositionally biased toward basic and acidic residues; the sequence is HKVEEKAAPEAAKAEPAEKAK. Over residues 151-162 the composition is skewed to low complexity; that stretch reads ARVVSAARVISR. A compositionally biased stretch (basic and acidic residues) spans 163 to 181; that stretch reads PGEEEEKKPEPVVESKPEP. Over residues 182 to 196 the composition is skewed to low complexity; that stretch reads VAEISPVAAALAARE. Composition is skewed to basic and acidic residues over residues 197-214 and 241-252; these read AAAR…EKGA and PEARTEAWKDAD. Residues 300 to 309 show a composition bias toward gly residues; sequence GRPGAPGGPR. Positions 316–335 are enriched in pro residues; that stretch reads PPRPGGPRPSGPGGPRPAGG. A compositionally biased stretch (basic and acidic residues) spans 378-388; sequence GGRRDDDDSQR. Basic residues predominate over residues 390-399; it reads NRGKGRRKGG. Positions 496–665 constitute a tr-type G domain; it reads PRPPVVTIMG…ALQSEIMELK (170 aa). The G1 stretch occupies residues 505–512; sequence GHVDHGKT. 505–512 contributes to the GTP binding site; that stretch reads GHVDHGKT. The segment at 530 to 534 is G2; the sequence is GITQH. The tract at residues 551–554 is G3; that stretch reads DTPG. Residues 551–555 and 605–608 contribute to the GTP site; these read DTPGH and NKMD. Residues 605–608 form a G4 region; sequence NKMD. Residues 641–643 are G5; it reads AAK.

The protein belongs to the TRAFAC class translation factor GTPase superfamily. Classic translation factor GTPase family. IF-2 subfamily.

Its subcellular location is the cytoplasm. Functionally, one of the essential components for the initiation of protein synthesis. Protects formylmethionyl-tRNA from spontaneous hydrolysis and promotes its binding to the 30S ribosomal subunits. Also involved in the hydrolysis of GTP during the formation of the 70S ribosomal complex. In Desulfovibrio desulfuricans (strain ATCC 27774 / DSM 6949 / MB), this protein is Translation initiation factor IF-2.